The primary structure comprises 522 residues: Bifunctional purine biosynthesis protein PurH (522 aa).

Positions 1-143 (MIRRALISVS…KNHARVAVVV (143 aa)) constitute an MGS-like domain.

Belongs to the PurH family.

It catalyses the reaction (6R)-10-formyltetrahydrofolate + 5-amino-1-(5-phospho-beta-D-ribosyl)imidazole-4-carboxamide = 5-formamido-1-(5-phospho-D-ribosyl)imidazole-4-carboxamide + (6S)-5,6,7,8-tetrahydrofolate. The catalysed reaction is IMP + H2O = 5-formamido-1-(5-phospho-D-ribosyl)imidazole-4-carboxamide. Its pathway is purine metabolism; IMP biosynthesis via de novo pathway; 5-formamido-1-(5-phospho-D-ribosyl)imidazole-4-carboxamide from 5-amino-1-(5-phospho-D-ribosyl)imidazole-4-carboxamide (10-formyl THF route): step 1/1. It functions in the pathway purine metabolism; IMP biosynthesis via de novo pathway; IMP from 5-formamido-1-(5-phospho-D-ribosyl)imidazole-4-carboxamide: step 1/1. This is Bifunctional purine biosynthesis protein PurH from Sorangium cellulosum (strain So ce56) (Polyangium cellulosum (strain So ce56)).